A 107-amino-acid chain; its full sequence is Universal stress protein B homolog (107 aa).

2 helical membrane passes run 6–25 and 89–106; these read TILFALMLVTAINVARYVTA and LFILSGSLLVLTTVVAFM.

It belongs to the universal stress protein B family.

The protein localises to the cell inner membrane. This chain is Universal stress protein B homolog, found in Vibrio cholerae serotype O1 (strain ATCC 39541 / Classical Ogawa 395 / O395).